The following is a 197-amino-acid chain: MADRKAQVSRDTLETQISVELNLDGTGTGKFNTGVPFLEHMMDQIARHGFIDLDVTCKGDTYIDDHHSVEDIGITIGQAMAKAVGDKRGIRRYGHAYVPLDEALSRVVIDFSGRPGLIMNIPFTQKRIGKFDTELFWEFFQGFVNHAGVTLHVDCLRGENAHHQIETVFKAFGRSLRMALERDERLGDAMPSTKGTL.

The protein belongs to the imidazoleglycerol-phosphate dehydratase family.

It localises to the cytoplasm. The catalysed reaction is D-erythro-1-(imidazol-4-yl)glycerol 3-phosphate = 3-(imidazol-4-yl)-2-oxopropyl phosphate + H2O. It participates in amino-acid biosynthesis; L-histidine biosynthesis; L-histidine from 5-phospho-alpha-D-ribose 1-diphosphate: step 6/9. The polypeptide is Imidazoleglycerol-phosphate dehydratase (Saccharophagus degradans (strain 2-40 / ATCC 43961 / DSM 17024)).